Reading from the N-terminus, the 810-residue chain is Lon protease (810 aa).

In terms of domain architecture, Lon N-terminal spans 40-233 (LIIVPVRGFV…MVAKLLAQRI (194 aa)). 385 to 392 (GPPGVGKT) contributes to the ATP binding site. Residues 621–802 (LSVPGVATGL…DDAMAAAFEG (182 aa)) enclose the Lon proteolytic domain. Active-site residues include Ser-708 and Lys-751.

The protein belongs to the peptidase S16 family. As to quaternary structure, homohexamer. Organized in a ring with a central cavity.

It is found in the cytoplasm. The catalysed reaction is Hydrolysis of proteins in presence of ATP.. Functionally, ATP-dependent serine protease that mediates the selective degradation of mutant and abnormal proteins as well as certain short-lived regulatory proteins. Required for cellular homeostasis and for survival from DNA damage and developmental changes induced by stress. Degrades polypeptides processively to yield small peptide fragments that are 5 to 10 amino acids long. Binds to DNA in a double-stranded, site-specific manner. This is Lon protease from Methylocella silvestris (strain DSM 15510 / CIP 108128 / LMG 27833 / NCIMB 13906 / BL2).